We begin with the raw amino-acid sequence, 234 residues long: NAD-reducing hydrogenase HoxS subunit gamma (234 aa).

In terms of domain architecture, 2Fe-2S ferredoxin-type spans 2-77 (SIQITIDGKT…GLNVEVNDPE (76 aa)). [2Fe-2S] cluster is bound by residues C35, C46, C49, and C61. Residues 77 to 116 (ELVDMRKALVEFLFAEGNHNCPSCEKSGRCQLQAVGYEVD) enclose the 4Fe-4S His(Cys)3-ligated-type domain. [4Fe-4S] cluster contacts are provided by H95, C97, C100, C106, C145, C148, C151, and C198.

This sequence belongs to the complex I 75 kDa subunit family. Tetramer of an alpha and a gamma subunits (flavin-containing dimer), and a delta and a nickel-containing beta subunits (hydrogenase dimer). Requires [2Fe-2S] cluster as cofactor. The cofactor is [4Fe-4S] cluster.

The protein resides in the cytoplasm. It carries out the reaction H2 + NAD(+) = NADH + H(+). Its function is as follows. Subunits alpha and gamma of HoxS constitute an NADH--oxidoreductase. This Cupriavidus necator (strain ATCC 17699 / DSM 428 / KCTC 22496 / NCIMB 10442 / H16 / Stanier 337) (Ralstonia eutropha) protein is NAD-reducing hydrogenase HoxS subunit gamma (hoxU).